Here is a 99-residue protein sequence, read N- to C-terminus: uncharacterized protein (99 aa).

Belongs to the ycf15 family.

It is found in the plastid. The protein resides in the chloroplast. This is an uncharacterized protein from Saccharum hybrid (Sugarcane).